The sequence spans 259 residues: Ribonuclease HII (259 aa).

Residues Thr70–Glu258 enclose the RNase H type-2 domain. A divalent metal cation is bound by residues Asp76, Glu77, and Asp168.

The protein belongs to the RNase HII family. It depends on Mn(2+) as a cofactor. Mg(2+) serves as cofactor.

The protein resides in the cytoplasm. The catalysed reaction is Endonucleolytic cleavage to 5'-phosphomonoester.. Its function is as follows. Endonuclease that specifically degrades the RNA of RNA-DNA hybrids. This is Ribonuclease HII from Streptococcus pneumoniae (strain ATCC 700669 / Spain 23F-1).